Here is a 233-residue protein sequence, read N- to C-terminus: Nickel import system ATP-binding protein NikE (233 aa).

Residues 2-228 form the ABC transporter domain; the sequence is IELKHVTFGY…DRHPYTKELV (227 aa). 35–42 serves as a coordination point for ATP; it reads GESGCGKS.

This sequence belongs to the ABC transporter superfamily. In terms of assembly, the complex is composed of two ATP-binding proteins (NikD and NikE), two transmembrane proteins (NikB and NikC) and a solute-binding protein (NikA).

The protein resides in the cell membrane. It catalyses the reaction Ni(2+)(out) + ATP + H2O = Ni(2+)(in) + ADP + phosphate + H(+). Functionally, part of the ABC transporter complex NikABCDE (Opp2) involved in nickel import. Probably responsible for energy coupling to the transport system. The polypeptide is Nickel import system ATP-binding protein NikE (Staphylococcus aureus (strain Mu50 / ATCC 700699)).